Consider the following 497-residue polypeptide: Endoglucanase 17 (497 aa).

The first 21 residues, 1-21 (MAAAGGAVLLLVLATATSVTG), serve as a signal peptide directing secretion. Residue Asp-77 is the Nucleophile of the active site. His-406 is a catalytic residue. Asn-451 carries N-linked (GlcNAc...) asparagine glycosylation. Active-site residues include Asp-458 and Glu-467.

The protein belongs to the glycosyl hydrolase 9 (cellulase E) family.

It localises to the secreted. It catalyses the reaction Endohydrolysis of (1-&gt;4)-beta-D-glucosidic linkages in cellulose, lichenin and cereal beta-D-glucans.. This is Endoglucanase 17 (GLU13) from Oryza sativa subsp. japonica (Rice).